The chain runs to 142 residues: Large ribosomal subunit protein uL13 (142 aa).

It belongs to the universal ribosomal protein uL13 family. Part of the 50S ribosomal subunit.

Functionally, this protein is one of the early assembly proteins of the 50S ribosomal subunit, although it is not seen to bind rRNA by itself. It is important during the early stages of 50S assembly. This is Large ribosomal subunit protein uL13 from Agathobacter rectalis (strain ATCC 33656 / DSM 3377 / JCM 17463 / KCTC 5835 / VPI 0990) (Eubacterium rectale).